Consider the following 508-residue polypeptide: ATP synthase subunit alpha, chloroplastic (508 aa).

ATP is bound at residue 173–180; that stretch reads GDRQTGKT.

This sequence belongs to the ATPase alpha/beta chains family. As to quaternary structure, F-type ATPases have 2 components, CF(1) - the catalytic core - and CF(0) - the membrane proton channel. CF(1) has five subunits: alpha(3), beta(3), gamma(1), delta(1), epsilon(1). CF(0) has four main subunits: a, b, b' and c.

The protein localises to the plastid. It is found in the chloroplast thylakoid membrane. The catalysed reaction is ATP + H2O + 4 H(+)(in) = ADP + phosphate + 5 H(+)(out). Functionally, produces ATP from ADP in the presence of a proton gradient across the membrane. The alpha chain is a regulatory subunit. The polypeptide is ATP synthase subunit alpha, chloroplastic (Chara vulgaris (Common stonewort)).